Consider the following 102-residue polypeptide: Monothiol glutaredoxin-S7 (102 aa).

Residues 1 to 101 form the Glutaredoxin domain; that stretch reads MEKLQKMTSE…PMLKRVGALW (101 aa). Residue cysteine 21 coordinates [2Fe-2S] cluster. A Responsive for interaction with TGA factors motif is present at residues 99–102; the sequence is ALWL.

This sequence belongs to the glutaredoxin family. CC-type subfamily.

Its subcellular location is the cytoplasm. The protein localises to the nucleus. May only reduce GSH-thiol disulfides, but not protein disulfides. This chain is Monothiol glutaredoxin-S7 (GRXS7), found in Arabidopsis thaliana (Mouse-ear cress).